The primary structure comprises 830 residues: DNA gyrase subunit A (830 aa).

The 481-residue stretch at L34 to L514 folds into the Topo IIA-type catalytic domain. The active-site O-(5'-phospho-DNA)-tyrosine intermediate is Y122. Positions Q541–G547 match the GyrA-box motif.

It belongs to the type II topoisomerase GyrA/ParC subunit family. In terms of assembly, heterotetramer, composed of two GyrA and two GyrB chains. In the heterotetramer, GyrA contains the active site tyrosine that forms a transient covalent intermediate with DNA, while GyrB binds cofactors and catalyzes ATP hydrolysis.

The protein resides in the cytoplasm. It carries out the reaction ATP-dependent breakage, passage and rejoining of double-stranded DNA.. Its function is as follows. A type II topoisomerase that negatively supercoils closed circular double-stranded (ds) DNA in an ATP-dependent manner to modulate DNA topology and maintain chromosomes in an underwound state. Negative supercoiling favors strand separation, and DNA replication, transcription, recombination and repair, all of which involve strand separation. Also able to catalyze the interconversion of other topological isomers of dsDNA rings, including catenanes and knotted rings. Type II topoisomerases break and join 2 DNA strands simultaneously in an ATP-dependent manner. The polypeptide is DNA gyrase subunit A (Buchnera aphidicola subsp. Acyrthosiphon pisum (strain APS) (Acyrthosiphon pisum symbiotic bacterium)).